We begin with the raw amino-acid sequence, 212 residues long: Peptide methionine sulfoxide reductase MsrA (212 aa).

Cys52 is a catalytic residue.

This sequence belongs to the MsrA Met sulfoxide reductase family.

The enzyme catalyses L-methionyl-[protein] + [thioredoxin]-disulfide + H2O = L-methionyl-(S)-S-oxide-[protein] + [thioredoxin]-dithiol. The catalysed reaction is [thioredoxin]-disulfide + L-methionine + H2O = L-methionine (S)-S-oxide + [thioredoxin]-dithiol. Has an important function as a repair enzyme for proteins that have been inactivated by oxidation. Catalyzes the reversible oxidation-reduction of methionine sulfoxide in proteins to methionine. In Shigella boydii serotype 4 (strain Sb227), this protein is Peptide methionine sulfoxide reductase MsrA.